Consider the following 279-residue polypeptide: MALKSYKPTTPGQRGLVLIDRSELWKGRPVKSLTEGLTKNGGRNNTGRITMRRKGGGAKRLYRIVDFKRTKFDVSATVERIEYDPNRTAFIALIKYEDGEQAYILAPQRLAVGDKVIAGAKVDVKPGNAMPFSGMPIGTIVHNVELKPGKGGQIARSAGTYAQFVGRDGGYAQIRLSSGELRLVRQECMATIGAVSNSDHSNQNFGKAGRNRHKGIRPSVRGVAMNPIDHPHGGGEGRTSGGRHPVTPWGKGTKGTRTRSNKSTDKYILRSRHAKKKGR.

Residues 223–279 (VAMNPIDHPHGGGEGRTSGGRHPVTPWGKGTKGTRTRSNKSTDKYILRSRHAKKKGR) are disordered. Over residues 269–279 (LRSRHAKKKGR) the composition is skewed to basic residues.

This sequence belongs to the universal ribosomal protein uL2 family. Part of the 50S ribosomal subunit. Forms a bridge to the 30S subunit in the 70S ribosome.

One of the primary rRNA binding proteins. Required for association of the 30S and 50S subunits to form the 70S ribosome, for tRNA binding and peptide bond formation. It has been suggested to have peptidyltransferase activity; this is somewhat controversial. Makes several contacts with the 16S rRNA in the 70S ribosome. The sequence is that of Large ribosomal subunit protein uL2 from Paracoccus denitrificans (strain Pd 1222).